A 235-amino-acid polypeptide reads, in one-letter code: Aspartate/glutamate leucyltransferase (235 aa).

It belongs to the R-transferase family. Bpt subfamily.

Its subcellular location is the cytoplasm. The catalysed reaction is N-terminal L-glutamyl-[protein] + L-leucyl-tRNA(Leu) = N-terminal L-leucyl-L-glutamyl-[protein] + tRNA(Leu) + H(+). It carries out the reaction N-terminal L-aspartyl-[protein] + L-leucyl-tRNA(Leu) = N-terminal L-leucyl-L-aspartyl-[protein] + tRNA(Leu) + H(+). Functions in the N-end rule pathway of protein degradation where it conjugates Leu from its aminoacyl-tRNA to the N-termini of proteins containing an N-terminal aspartate or glutamate. This is Aspartate/glutamate leucyltransferase from Pseudomonas syringae pv. syringae (strain B728a).